A 261-amino-acid polypeptide reads, in one-letter code: Src-like-adapter 2 (261 aa).

Residues 1–10 are compositionally biased toward basic residues; sequence MGSLPSRRKS. Residues 1-31 form a disordered region; sequence MGSLPSRRKSLPSPSLSSSVQGQGPVTMEAE. The N-myristoyl glycine moiety is linked to residue Gly-2. In terms of domain architecture, SH3 spans 32–92; it reads RSKATAVALG…PSVHVAKVSH (61 aa). The SH2 domain occupies 94 to 191; it reads WLYEGLSREK…DICCLLKEPC (98 aa). The SLA C-terminal stretch occupies residues 195–261; that stretch reads RAGPLPGKDI…NDEAVSLDDA (67 aa).

As to quaternary structure, interacts (via SH2 domain) with ZAP70 (phosphorylated) and CD3Z (phosphorylated). Interacts (via SH2 domain) with CSF1R (phosphorylated). Interacts (via its C-terminal domain) with CBL (phosphorylated). In terms of processing, phosphorylated by CSF1R. As to expression, predominantly expressed in immune system, with highest levels in peripheral blood leukocytes. Expressed in spleen, thymus and lymph nodes. Expressed in T-cells as well as in monocytes, and at low level in B-cells. Also detected in placenta, prostate, skin, retina and colon.

The protein resides in the cytoplasm. Its subcellular location is the cell membrane. The protein localises to the cytoplasmic vesicle. In terms of biological role, adapter protein, which negatively regulates T-cell receptor (TCR) signaling. Inhibits T-cell antigen-receptor induced activation of nuclear factor of activated T-cells. May act by linking signaling proteins such as ZAP70 with CBL, leading to a CBL dependent degradation of signaling proteins. The protein is Src-like-adapter 2 (SLA2) of Homo sapiens (Human).